Here is a 692-residue protein sequence, read N- to C-terminus: Elongation factor G (692 aa).

The 275-residue stretch at 8-282 folds into the tr-type G domain; that stretch reads EKTRNIGIMA…AVIDYLPSPL (275 aa). GTP-binding positions include 17–24, 81–85, and 135–138; these read AHVDAGKT, DTPGH, and NKMD.

This sequence belongs to the TRAFAC class translation factor GTPase superfamily. Classic translation factor GTPase family. EF-G/EF-2 subfamily.

It localises to the cytoplasm. Catalyzes the GTP-dependent ribosomal translocation step during translation elongation. During this step, the ribosome changes from the pre-translocational (PRE) to the post-translocational (POST) state as the newly formed A-site-bound peptidyl-tRNA and P-site-bound deacylated tRNA move to the P and E sites, respectively. Catalyzes the coordinated movement of the two tRNA molecules, the mRNA and conformational changes in the ribosome. The chain is Elongation factor G from Streptococcus agalactiae serotype Ia (strain ATCC 27591 / A909 / CDC SS700).